The following is a 103-amino-acid chain: Small ribosomal subunit protein uS10 (103 aa).

The protein belongs to the universal ribosomal protein uS10 family. Part of the 30S ribosomal subunit.

Involved in the binding of tRNA to the ribosomes. The polypeptide is Small ribosomal subunit protein uS10 (Shewanella halifaxensis (strain HAW-EB4)).